A 161-amino-acid chain; its full sequence is MSVTLHTDVGDIKIEVFCERTPKTCENFLALCASNYYNGCVFHRNIKGFMVQTGDPTGTGRGGSSIWGKKFEDEYSEYLKHNVRGVVSMANNGPNTNGSQFFITYGKQPHLDMKYTVFGKVIDGLETLDELEKLPVNEKTYRPLNDVHIKDITIHANPFAQ.

S2 is subject to N-acetylserine. The 153-residue stretch at 2–154 (SVTLHTDVGD…NDVHIKDITI (153 aa)) folds into the PPIase cyclophilin-type domain. Omega-N-methylarginine is present on R61.

Belongs to the cyclophilin-type PPIase family. PPIL3 subfamily. As to quaternary structure, identified in the spliceosome C complex.

The enzyme catalyses [protein]-peptidylproline (omega=180) = [protein]-peptidylproline (omega=0). Functionally, PPIases accelerate the folding of proteins. It catalyzes the cis-trans isomerization of proline imidic peptide bonds in oligopeptides. May be involved in pre-mRNA splicing. This is Peptidyl-prolyl cis-trans isomerase-like 3 (Ppil3) from Rattus norvegicus (Rat).